We begin with the raw amino-acid sequence, 39 residues long: Photosystem I reaction center subunit IX (39 aa).

A helical transmembrane segment spans residues 4-24 (FLTTAPVVAAIWFTLTAGILI).

This sequence belongs to the PsaJ family.

It localises to the cellular thylakoid membrane. May help in the organization of the PsaE and PsaF subunits. The polypeptide is Photosystem I reaction center subunit IX (Synechococcus sp. (strain CC9311)).